Reading from the N-terminus, the 1282-residue chain is Cytokine receptor (1282 aa).

A signal peptide spans 1–23 (MVAQEQLVLLLMLLAGCRGGANA). Residues 24 to 889 (ILDPGWVIPS…CTPDTHSVKA (866 aa)) are Extracellular-facing. Residues Asn-44, Asn-86, Asn-87, and Asn-114 are each glycosylated (N-linked (GlcNAc...) asparagine). Cys-47 and Cys-106 form a disulfide bridge. Fibronectin type-III domains are found at residues 124-220 (PLLV…NHFE), 227-327 (PGQN…TAPA), 329-431 (PRRP…SNRD), 436-535 (EPRN…KKDD), 537-631 (AKME…TGEA), 635-735 (QPRE…TAIG), and 736-836 (VPSP…LMST). A disulfide bond links Cys-132 and Cys-142. Asn-143 and Asn-156 each carry an N-linked (GlcNAc...) asparagine glycan. Residues Cys-173 and Cys-183 are joined by a disulfide bond. 9 N-linked (GlcNAc...) asparagine glycosylation sites follow: Asn-184, Asn-230, Asn-235, Asn-278, Asn-298, Asn-310, Asn-376, Asn-448, and Asn-466. Cysteines 472 and 482 form a disulfide. Asn-568, Asn-581, Asn-626, Asn-676, Asn-703, Asn-777, Asn-790, and Asn-862 each carry an N-linked (GlcNAc...) asparagine glycan. A helical transmembrane segment spans residues 890–910 (MYQTIEVTVAILVLGVIFYLV). Residues 911-1282 (YKKYRKMSDI…NAMAHNRHVL (372 aa)) lie on the Cytoplasmic side of the membrane. Residue Ser-976 is modified to Phosphoserine. Disordered regions lie at residues 989 to 1092 (TASS…HTFS) and 1238 to 1258 (TVGSPTHAAGGAPGGGNQHSR). Composition is skewed to basic and acidic residues over residues 999–1009 (VDRDGYDDNHE) and 1033–1064 (NDRERERERDREQEREREQQQQQRESEMDREQ).

Belongs to the type I cytokine receptor family. In terms of assembly, interacts with wdp; the interaction promotes internalization of dome and its subsequent lysosomal degradation; thereby reducing JAK/STAT signaling. Undergoes lysosomal degradation. In terms of tissue distribution, in stage 11 embryos, tracheal pits show highest expression, at stage 14 high expression is detected in the posterior spiracles, gut and head.

It localises to the apicolateral cell membrane. In terms of biological role, critical for epithelial morphogenesis during oogenesis; border cell migration. Required in the germarium for the polarization of follicle cells during encapsulation of germline cells. Required for embryonic segmentation and trachea specification. Essential receptor molecule for upd and JAK/STAT signaling during oogenesis. This is Cytokine receptor (dome) from Drosophila melanogaster (Fruit fly).